Reading from the N-terminus, the 572-residue chain is Mitochondrial distribution and morphology protein 34 (572 aa).

The 195-residue stretch at 1-195 (MAFNFNWSPL…LPAIIHRLSL (195 aa)) folds into the SMP-LTD domain. 3 disordered regions span residues 210-239 (TQAEKAETANGEGPGQDPLASPPQDPVDAL), 330-423 (SASI…PLSP), and 455-482 (RDMGGPSSTSDPATQATQSEDTSATPRA). Residues 330–347 (SASIASMQTRSSTPSHTF) are compositionally biased toward polar residues. The segment covering 358 to 370 (RHSKAHSRKRKKR) has biased composition (basic residues). Over residues 371-381 (VVDLRRPKTTD) the composition is skewed to basic and acidic residues. 2 stretches are compositionally biased toward polar residues: residues 387–400 (SDESAFTESTSAPS) and 460–480 (PSSTSDPATQATQSEDTSATP).

It belongs to the MDM34 family. As to quaternary structure, component of the ER-mitochondria encounter structure (ERMES) or MDM complex, composed of mmm1, mdm10, mdm12 and mdm34.

The protein resides in the mitochondrion outer membrane. Component of the ERMES/MDM complex, which serves as a molecular tether to connect the endoplasmic reticulum (ER) and mitochondria. Components of this complex are involved in the control of mitochondrial shape and protein biogenesis, and function in nonvesicular lipid trafficking between the ER and mitochondria. Mdm34 is required for the interaction of the ER-resident membrane protein mmm1 and the outer mitochondrial membrane-resident beta-barrel protein mdm10. The protein is Mitochondrial distribution and morphology protein 34 of Aspergillus clavatus (strain ATCC 1007 / CBS 513.65 / DSM 816 / NCTC 3887 / NRRL 1 / QM 1276 / 107).